A 130-amino-acid polypeptide reads, in one-letter code: Protein ApaG (130 aa).

In terms of domain architecture, ApaG spans 3–127; it reads RALTRDIEVT…FSLDSPGLVR (125 aa).

The chain is Protein ApaG from Rhizobium meliloti (strain 1021) (Ensifer meliloti).